The following is a 269-amino-acid chain: 5'-nucleotidase SurE (269 aa).

A divalent metal cation is bound by residues Asp-11, Asp-12, Ser-42, and Asn-90.

Belongs to the SurE nucleotidase family. It depends on a divalent metal cation as a cofactor.

The protein localises to the cytoplasm. The enzyme catalyses a ribonucleoside 5'-phosphate + H2O = a ribonucleoside + phosphate. In terms of biological role, nucleotidase that shows phosphatase activity on nucleoside 5'-monophosphates. This Haloarcula marismortui (strain ATCC 43049 / DSM 3752 / JCM 8966 / VKM B-1809) (Halobacterium marismortui) protein is 5'-nucleotidase SurE.